A 65-amino-acid chain; its full sequence is MSLSPSERPDTVDRKLLDILVCPVTKGPLEFDPARQELISRGAKLAYPIRDGIPIMLPEEARKLG.

It belongs to the UPF0434 family.

The sequence is that of UPF0434 protein Rpal_0270 from Rhodopseudomonas palustris (strain TIE-1).